The sequence spans 347 residues: NADH-ubiquinone oxidoreductase chain 2 (347 aa).

Helical transmembrane passes span 3–23, 59–79, 93–115, 150–170, 178–198, 199–219, 242–262, 274–294, and 326–346; these read PLAL…TMMS, YFMT…INLM, VASN…HFWV, NTNL…WGGL, ILAY…PFNP, TLTL…FMIL, IMLM…GFMP, NSII…YFYM, and LPTL…ISML.

Belongs to the complex I subunit 2 family. In terms of assembly, core subunit of respiratory chain NADH dehydrogenase (Complex I) which is composed of 45 different subunits. Interacts with TMEM242.

It localises to the mitochondrion inner membrane. The enzyme catalyses a ubiquinone + NADH + 5 H(+)(in) = a ubiquinol + NAD(+) + 4 H(+)(out). Its function is as follows. Core subunit of the mitochondrial membrane respiratory chain NADH dehydrogenase (Complex I) which catalyzes electron transfer from NADH through the respiratory chain, using ubiquinone as an electron acceptor. Essential for the catalytic activity and assembly of complex I. The sequence is that of NADH-ubiquinone oxidoreductase chain 2 from Loxodonta africana (African elephant).